Consider the following 214-residue polypeptide: GTP-binding nuclear protein GSP1/Ran (214 aa).

The region spanning 4–168 is the Small GTPase Ran-type domain; it reads EVPTFKLVLV…LWLARKLAGN (165 aa). GTP is bound at residue 15–22; sequence DGGTGKTT. Residues 34 to 42 form a switch-I region; sequence KKYIATIGV. GTP-binding positions include glycine 65, 119–122, and 147–149; these read NKVD and SAK. Positions 65-81 are switch-II; that stretch reads GQEKFGGLRDGYYINAQ.

The protein belongs to the small GTPase superfamily. Ran family. As to quaternary structure, found in a nuclear export complex with RanGTP, exportin and pre-miRNA.

Its subcellular location is the nucleus. Its function is as follows. GTP-binding protein involved in nucleocytoplasmic transport. Required for the import of protein into the nucleus and also for RNA export. Involved in chromatin condensation and control of cell cycle. This chain is GTP-binding nuclear protein GSP1/Ran (GSP1), found in Candida glabrata (strain ATCC 2001 / BCRC 20586 / JCM 3761 / NBRC 0622 / NRRL Y-65 / CBS 138) (Yeast).